The chain runs to 304 residues: Eukaryotic translation initiation factor 2 subunit alpha (304 aa).

An S1 motif domain is found at Asp-17–Arg-88. Ser-52 bears the Phosphoserine; by GCN2 mark. A disordered region spans residues Leu-283 to Glu-304. Positions Glu-284–Asp-293 are enriched in basic and acidic residues. 2 positions are modified to phosphoserine: Ser-292 and Ser-294. Residues Ser-294–Glu-304 are compositionally biased toward acidic residues.

This sequence belongs to the eIF-2-alpha family. Eukaryotic translation initiation factor 2 eIF2 is a heterotrimeric complex composed of an alpha, a beta and a gamma subunit. The factors eIF-1, eIF-2, eIF-3, TIF5/eIF-5 and methionyl-tRNAi form a multifactor complex (MFC) that may bind to the 40S ribosome. Interacts with CDC123; the interaction is direct. Interacts with GCD1. Phosphorylated; phosphorylation on Ser-52 by the GCN2 protein kinase occurs in response to low amino acid, carbon, or purine availability. Phosphorylation inhibits the guanine nucleotide exchange factor activity of the eIF2B complex.

The protein localises to the cytoplasm. It localises to the cytosol. EIF-2 functions in the early steps of protein synthesis by forming a ternary complex with GTP and initiator tRNA. This complex binds to a 40S ribosomal subunit, followed by mRNA binding to form a 43S pre-initiation complex. Junction of the 60S ribosomal subunit to form the 80S initiation complex is preceded by hydrolysis of the GTP bound to eIF-2 and release of an eIF-2-GDP binary complex. In order for eIF-2 to recycle and catalyze another round of initiation, the GDP bound to eIF-2 must exchange with GTP by way of a reaction catalyzed by eIF2B. The chain is Eukaryotic translation initiation factor 2 subunit alpha from Saccharomyces cerevisiae (strain ATCC 204508 / S288c) (Baker's yeast).